The sequence spans 122 residues: Immunoglobulin lambda variable 4-3 (122 aa).

A signal peptide spans 1-19 (MAWVSFYLLPFIFSTGLCA). The framework-1 stretch occupies residues 20–44 (LPVLTQPPSASALLGASIKLTCTLS). One can recognise an Ig-like domain in the interval 21–122 (PVLTQPPSAS…ESHTIDGQVG (102 aa)). C41 and C111 are oxidised to a cystine. The segment at 45–51 (SEHSTYT) is complementarity-determining-1. A framework-2 region spans residues 52 to 68 (IEWYQQRPGRSPQYIMK). Positions 69–75 (VKSDGSH) are complementarity-determining-2. Positions 76–111 (SKGDGIPDRFMGSSSGADRYLTFSNLQSDDEAEYHC) are framework-3. Residues 112–122 (GESHTIDGQVG) form a complementarity-determining-3 region.

In terms of assembly, immunoglobulins are composed of two identical heavy chains and two identical light chains; disulfide-linked.

It is found in the secreted. The protein resides in the cell membrane. Its function is as follows. V region of the variable domain of immunoglobulin light chains that participates in the antigen recognition. Immunoglobulins, also known as antibodies, are membrane-bound or secreted glycoproteins produced by B lymphocytes. In the recognition phase of humoral immunity, the membrane-bound immunoglobulins serve as receptors which, upon binding of a specific antigen, trigger the clonal expansion and differentiation of B lymphocytes into immunoglobulins-secreting plasma cells. Secreted immunoglobulins mediate the effector phase of humoral immunity, which results in the elimination of bound antigens. The antigen binding site is formed by the variable domain of one heavy chain, together with that of its associated light chain. Thus, each immunoglobulin has two antigen binding sites with remarkable affinity for a particular antigen. The variable domains are assembled by a process called V-(D)-J rearrangement and can then be subjected to somatic hypermutations which, after exposure to antigen and selection, allow affinity maturation for a particular antigen. The sequence is that of Immunoglobulin lambda variable 4-3 from Homo sapiens (Human).